The following is a 517-amino-acid chain: Glutamate--cysteine ligase (517 aa).

It belongs to the glutamate--cysteine ligase type 1 family. Type 1 subfamily.

The catalysed reaction is L-cysteine + L-glutamate + ATP = gamma-L-glutamyl-L-cysteine + ADP + phosphate + H(+). The protein operates within sulfur metabolism; glutathione biosynthesis; glutathione from L-cysteine and L-glutamate: step 1/2. This is Glutamate--cysteine ligase from Pectobacterium atrosepticum (strain SCRI 1043 / ATCC BAA-672) (Erwinia carotovora subsp. atroseptica).